The primary structure comprises 469 residues: ATP synthase subunit beta (469 aa).

Position 157 to 164 (157 to 164) interacts with ATP; that stretch reads GGAGVGKT.

The protein belongs to the ATPase alpha/beta chains family. F-type ATPases have 2 components, CF(1) - the catalytic core - and CF(0) - the membrane proton channel. CF(1) has five subunits: alpha(3), beta(3), gamma(1), delta(1), epsilon(1). CF(0) has three main subunits: a(1), b(2) and c(9-12). The alpha and beta chains form an alternating ring which encloses part of the gamma chain. CF(1) is attached to CF(0) by a central stalk formed by the gamma and epsilon chains, while a peripheral stalk is formed by the delta and b chains.

It localises to the cell membrane. The enzyme catalyses ATP + H2O + 4 H(+)(in) = ADP + phosphate + 5 H(+)(out). Its function is as follows. Produces ATP from ADP in the presence of a proton gradient across the membrane. The catalytic sites are hosted primarily by the beta subunits. This chain is ATP synthase subunit beta, found in Brevibacillus brevis (strain 47 / JCM 6285 / NBRC 100599).